A 101-amino-acid chain; its full sequence is Enhancer of yellow 2 transcription factor (101 aa).

The protein belongs to the ENY2 family. In terms of assembly, component of the nuclear pore complex (NPC)-associated AMEX complex (anchoring and mRNA export complex), composed of at least e(y)2 and xmas-2. Component of the SAGA transcription coactivator-HAT complexes, at least composed of Ada2b, e(y)2, Pcaf/Gcn5, Taf10 and Nipped-A/Trrap. Within the SAGA complex, e(y)2, Sgf11, and not/nonstop form an additional subcomplex of SAGA called the DUB module (deubiquitination module). Component of the THO complex, composed of at least e(y)2, HPR1, THO2, THOC5, THOC6 and THOC7. Interacts with e(y)1. Interacts with su(Hw) (via zinc fingers). Interacts with xmas-2; required for localization to the nuclear periphery. Interacts with the nuclear pore complex (NPC).

Its subcellular location is the nucleus. The protein localises to the nucleoplasm. The protein resides in the cytoplasm. Functionally, involved in mRNA export coupled transcription activation by association with both the AMEX and the SAGA complexes. The SAGA complex is a multiprotein complex that activates transcription by remodeling chromatin and mediating histone acetylation and deubiquitination. Within the SAGA complex, participates in a subcomplex that specifically deubiquitinates histone H2B. The SAGA complex is recruited to specific gene promoters by activators, where it is required for transcription. Required for nuclear receptor-mediated transactivation. Involved in transcription elongation by recruiting the THO complex onto nascent mRNA. The AMEX complex functions in docking export-competent ribonucleoprotein particles (mRNPs) to the nuclear entrance of the nuclear pore complex (nuclear basket). AMEX participates in mRNA export and accurate chromatin positioning in the nucleus by tethering genes to the nuclear periphery. This chain is Enhancer of yellow 2 transcription factor, found in Drosophila sechellia (Fruit fly).